The chain runs to 137 residues: ATP synthase epsilon chain (137 aa).

It belongs to the ATPase epsilon chain family. In terms of assembly, F-type ATPases have 2 components, CF(1) - the catalytic core - and CF(0) - the membrane proton channel. CF(1) has five subunits: alpha(3), beta(3), gamma(1), delta(1), epsilon(1). CF(0) has three main subunits: a, b and c.

It localises to the cell membrane. Produces ATP from ADP in the presence of a proton gradient across the membrane. The protein is ATP synthase epsilon chain of Desulforudis audaxviator (strain MP104C).